The following is a 468-amino-acid chain: BTB and MATH domain-containing protein 45 (468 aa).

The MATH domain occupies 7–124 (VFELSHVFKD…DDSIIIEVLV (118 aa)). BTB domains lie at 148–215 (SDGI…IDDD) and 304–368 (SDVI…IDDL).

This Caenorhabditis elegans protein is BTB and MATH domain-containing protein 45 (bath-45).